Here is a 162-residue protein sequence, read N- to C-terminus: MSQVYFDVEADGQPIGRVVFKLYNDIVPKTAENFRALCTGEKGFGYAGSPFHRVIPDFMLQGGDFTAGNGTGGKSIYGGKFPDENFKKHHDRPGLLSMANAGPNTNGSQFFITTVPCPWLDGKHVVFGEVVDGYDIVKKVESLGSPSGATKARIVVAKSGEL.

At serine 2 the chain carries N-acetylserine. Residues 5–161 enclose the PPIase cyclophilin-type domain; it reads YFDVEADGQP…ARIVVAKSGE (157 aa). Glycyl lysine isopeptide (Lys-Gly) (interchain with G-Cter in ubiquitin) cross-links involve residues lysine 29 and lysine 42. Threonine 71 bears the Phosphothreonine mark. Residues lysine 123 and lysine 139 each participate in a glycyl lysine isopeptide (Lys-Gly) (interchain with G-Cter in ubiquitin) cross-link. Serine 142 and serine 145 each carry phosphoserine. Glycyl lysine isopeptide (Lys-Gly) (interchain with G-Cter in ubiquitin) cross-links involve residues lysine 151 and lysine 158.

It belongs to the cyclophilin-type PPIase family. PPIase A subfamily. In terms of assembly, interacts with a complex composed of SIN3 and RPD3. Identified in the Set3C complex with HOS2, HST1, SNT1, SIF2, HOS4/YIL112W and SET3.

The protein resides in the cytoplasm. The protein localises to the nucleus. Its subcellular location is the mitochondrion intermembrane space. The catalysed reaction is [protein]-peptidylproline (omega=180) = [protein]-peptidylproline (omega=0). Binds cyclosporin A (CsA). CsA mediates some of its effects via an inhibitory action on PPIase. Functionally, PPIases accelerate the folding of proteins. It catalyzes the cis-trans isomerization of proline imidic peptide bonds in oligopeptides. Involved in histone deacetylase complexes, suggesting a function in chromatin. Imports fructose-1,6-bisphosphatase (FBPase) into the intermediate vacuole import and degradation (Vid) vesicles. Regulates the meiotic gene program via the Set3C histone deacetylase complex to promote efficient sporulation, and the prolyl-isomerase activity is required for this function. The sequence is that of Peptidyl-prolyl cis-trans isomerase (CPR1) from Saccharomyces cerevisiae (strain ATCC 204508 / S288c) (Baker's yeast).